Consider the following 136-residue polypeptide: FK506-binding protein 2 (136 aa).

Residues 1–17 form the signal peptide; sequence MLSQIWILFTFMVCVIA. One can recognise a PPIase FKBP-type domain in the interval 45–134; sequence GDMVSVHYTG…DFDVELVDIA (90 aa).

It belongs to the FKBP-type PPIase family. FKBP2 subfamily.

It is found in the endoplasmic reticulum. The enzyme catalyses [protein]-peptidylproline (omega=180) = [protein]-peptidylproline (omega=0). With respect to regulation, inhibited by both FK506 and rapamycin. In terms of biological role, PPIases accelerate the folding of proteins. It catalyzes the cis-trans isomerization of proline imidic peptide bonds in oligopeptides. The sequence is that of FK506-binding protein 2 (FPR2) from Candida glabrata (strain ATCC 2001 / BCRC 20586 / JCM 3761 / NBRC 0622 / NRRL Y-65 / CBS 138) (Yeast).